Consider the following 150-residue polypeptide: Large ribosomal subunit protein bL9 (150 aa).

It belongs to the bacterial ribosomal protein bL9 family.

In terms of biological role, binds to the 23S rRNA. The sequence is that of Large ribosomal subunit protein bL9 from Mycoplasmopsis pulmonis (strain UAB CTIP) (Mycoplasma pulmonis).